The sequence spans 414 residues: MRSWPSPAVPTLSGPSVPLRLYDTSDQAVRSVNPGAVSGMYVCGITPYDATHLGHAATYLTFDLINRVLRANGHEVHYVQNVTDVDDPLFERAARDGIDWRDLGARETDLFCEDMQALRVLAPQDYIGAVESIDEVIALVGRLLENGAAYIVDDPEFPDVYYRTDATEQFGYESGYDRATMERFFAERGGDPDRPGKRDPLDALLWRAARPGEPSWPSPQGPGRPGWHIECAAIAQNRLGVGFDIQGGGSDLIFPHHEFSAAHVEADTGERRFARHYVHAAMIGLDGEKMSKSRGNLVFVSTLRRAGVDPAAIRLGLFEGHYRTDRAWSDEVLARAQARLDLWRNAFAAASSPDGAELVGRLRRYLADDLDTPKALSALDAWAHRAVTSGGPDPDGPSTVATAVDALLGVAVSA.

Cys-43 is a binding site for Zn(2+). L-cysteinyl-5'-AMP contacts are provided by residues Cys-43–Thr-46, Thr-58, and Asn-81–Thr-83. The 'HIGH' region motif lies at Ile-45–His-55. A 'ERGGDP' region motif is present at residues Glu-187 to Pro-192. Residue Trp-227 coordinates L-cysteinyl-5'-AMP. Cys-231 lines the Zn(2+) pocket. An L-cysteinyl-5'-AMP-binding site is contributed by Gly-249 to Asp-251. His-256 lines the Zn(2+) pocket. Ile-283 contributes to the L-cysteinyl-5'-AMP binding site. Residues Lys-289–Ser-293 carry the 'KMSKS' region motif.

Belongs to the class-I aminoacyl-tRNA synthetase family. MshC subfamily. Monomer. Zn(2+) is required as a cofactor.

It catalyses the reaction 1D-myo-inositol 2-amino-2-deoxy-alpha-D-glucopyranoside + L-cysteine + ATP = 1D-myo-inositol 2-(L-cysteinylamino)-2-deoxy-alpha-D-glucopyranoside + AMP + diphosphate + H(+). Functionally, catalyzes the ATP-dependent condensation of GlcN-Ins and L-cysteine to form L-Cys-GlcN-Ins. This is L-cysteine:1D-myo-inositol 2-amino-2-deoxy-alpha-D-glucopyranoside ligase from Tsukamurella paurometabola (strain ATCC 8368 / DSM 20162 / CCUG 35730 / CIP 100753 / JCM 10117 / KCTC 9821 / NBRC 16120 / NCIMB 702349 / NCTC 13040) (Corynebacterium paurometabolum).